The sequence spans 214 residues: ATP phosphoribosyltransferase (214 aa).

This sequence belongs to the ATP phosphoribosyltransferase family. Short subfamily. As to quaternary structure, heteromultimer composed of HisG and HisZ subunits.

It localises to the cytoplasm. The enzyme catalyses 1-(5-phospho-beta-D-ribosyl)-ATP + diphosphate = 5-phospho-alpha-D-ribose 1-diphosphate + ATP. It participates in amino-acid biosynthesis; L-histidine biosynthesis; L-histidine from 5-phospho-alpha-D-ribose 1-diphosphate: step 1/9. Catalyzes the condensation of ATP and 5-phosphoribose 1-diphosphate to form N'-(5'-phosphoribosyl)-ATP (PR-ATP). Has a crucial role in the pathway because the rate of histidine biosynthesis seems to be controlled primarily by regulation of HisG enzymatic activity. This Streptococcus sanguinis (strain SK36) protein is ATP phosphoribosyltransferase.